A 274-amino-acid polypeptide reads, in one-letter code: Octanoyltransferase LipM (274 aa).

The 213-residue stretch at 32–244 folds into the BPL/LPL catalytic domain; sequence GEVPPTLRFY…GFARALGLTL (213 aa). Cys-146 serves as the catalytic Acyl-thioester intermediate.

Belongs to the octanoyltransferase LipM family. As to quaternary structure, monomer.

It catalyses the reaction octanoyl-[ACP] + L-lysyl-[protein] = N(6)-octanoyl-L-lysyl-[protein] + holo-[ACP] + H(+). The protein operates within protein modification; protein lipoylation via endogenous pathway; protein N(6)-(lipoyl)lysine from octanoyl-[acyl-carrier-protein]. In terms of biological role, catalyzes the transfer of endogenously produced octanoic acid from octanoyl-acyl-carrier-protein onto the lipoyl domain of GcvH, an intermediate carrier during protein lipoylation. This is Octanoyltransferase LipM from Symbiobacterium thermophilum (strain DSM 24528 / JCM 14929 / IAM 14863 / T).